The sequence spans 1643 residues: DNA-directed RNA polymerase subunit beta' (1643 aa).

Residues Cys64, Cys66, Cys79, and Cys82 each contribute to the Zn(2+) site. The Mg(2+) site is built by Asp684, Asp686, and Asp688. The Zn(2+) site is built by Cys1046, Cys1239, Cys1246, and Cys1249.

It belongs to the RNA polymerase beta' chain family. As to quaternary structure, the RNAP catalytic core consists of 2 alpha, 1 beta, 1 beta' and 1 omega subunit. When a sigma factor is associated with the core the holoenzyme is formed, which can initiate transcription. Requires Mg(2+) as cofactor. The cofactor is Zn(2+).

The catalysed reaction is RNA(n) + a ribonucleoside 5'-triphosphate = RNA(n+1) + diphosphate. In terms of biological role, DNA-dependent RNA polymerase catalyzes the transcription of DNA into RNA using the four ribonucleoside triphosphates as substrates. The polypeptide is DNA-directed RNA polymerase subunit beta' (Petrotoga mobilis (strain DSM 10674 / SJ95)).